A 232-amino-acid chain; its full sequence is MTATKMNAQEIIQFIANAEKKTSVKVTFEGQLATAVPSSVVKLGNVLFGDWKDVAPLLEGLVENQDYVVEQDARNSAVPLLDKRAINARIEPGAIIRDQVEIGDNAVIMMGSVINIGAEIGAGTMIDMGAILGGRAIVGKNSHVGAGAVLAGVIEPASAEPVRVGDNVLIGANAVVIEGVQIGSGSVVAAGAIVTQDVPENVVVAGVPARIIKEIDAQTQQKTALEDALRTL.

Belongs to the transferase hexapeptide repeat family. DapH subfamily.

The enzyme catalyses (S)-2,3,4,5-tetrahydrodipicolinate + acetyl-CoA + H2O = L-2-acetamido-6-oxoheptanedioate + CoA. Its pathway is amino-acid biosynthesis; L-lysine biosynthesis via DAP pathway; LL-2,6-diaminopimelate from (S)-tetrahydrodipicolinate (acetylase route): step 1/3. Functionally, catalyzes the transfer of an acetyl group from acetyl-CoA to tetrahydrodipicolinate. The chain is 2,3,4,5-tetrahydropyridine-2,6-dicarboxylate N-acetyltransferase from Streptococcus pneumoniae serotype 4 (strain ATCC BAA-334 / TIGR4).